We begin with the raw amino-acid sequence, 907 residues long: Leucine-rich repeat-containing G-protein coupled receptor 5 (907 aa).

The signal sequence occupies residues 1–21; that stretch reads MDTSCVHMLLSLLALLQLVAA. Residues 22–561 are Extracellular-facing; the sequence is GSSPGPDAIP…EHLFGSWLIR (540 aa). The LRRNT domain maps to 25–66; it reads PGPDAIPRGCPSHCHCELDGRMLLRVDCSDLGLSELPSNLSV. Cystine bridges form between Cys-34–Cys-40 and Cys-38–Cys-52. Residues Asn-63 and Asn-77 are each glycosylated (N-linked (GlcNAc...) asparagine). 16 LRR repeats span residues 67 to 88, 91 to 112, 115 to 136, 139 to 160, 163 to 184, 187 to 208, 211 to 232, 235 to 256, 258 to 279, 282 to 303, 306 to 325, 329 to 350, 353 to 374, 375 to 396, 399 to 420, and 423 to 446; these read FTSY…LLHR, FLEE…AFTG, SLKV…ALQN, SLQS…CFSG, SLRH…AFRS, ALQA…AFGN, SLVV…CFDG, SLET…IKTL, NLKE…AFVG, SLIT…AFQH, ELRT…PHLT, TLES…VCDQ, NLQV…SGCQ, KLQK…TFQQ, NLRS…AFST, and SLIK…HGLT. A glycan (N-linked (GlcNAc...) asparagine) is linked at Asn-208. Cysteines 348 and 373 form a disulfide. An intrachain disulfide couples Cys-479 to Cys-541. The helical transmembrane segment at 562 to 582 threads the bilayer; it reads IGVWTTAVLALSCNALVALTV. The Cytoplasmic portion of the chain corresponds to 583 to 593; it reads FRTPLYISSIK. Residues 594 to 614 form a helical membrane-spanning segment; it reads LLIGVIAVVDILMGVSSAVLA. Residues 615-638 are Extracellular-facing; that stretch reads AVDAFTFGRFAQHGAWWEDGIGCQ. A disulfide bond links Cys-637 and Cys-712. Residues 639–659 form a helical membrane-spanning segment; it reads IVGFLSIFASESSIFLLTLAA. Residues 660 to 682 lie on the Cytoplasmic side of the membrane; it reads LERGFSVKCSSKFEVKAPLFSLR. Residues 683 to 703 form a helical membrane-spanning segment; the sequence is AIVLLCVLLALTIATIPLLGG. Residues 704 to 723 lie on the Extracellular side of the membrane; sequence SKYNASPLCLPLPFGEPSTT. A helical transmembrane segment spans residues 724-744; sequence GYMVALVLLNSLCFLIMTIAY. At 745 to 767 the chain is on the cytoplasmic side; it reads TKLYCSLEKGELENLWDCSMVKH. Residues 768–788 traverse the membrane as a helical segment; it reads IALLLFANCILYCPVAFLSFS. Topologically, residues 789–802 are extracellular; the sequence is SLLNLTFISPDVIK. The N-linked (GlcNAc...) asparagine glycan is linked to Asn-792. A helical transmembrane segment spans residues 803 to 823; it reads FILLVIVPLPSCLNPLLYIVF. Residues 824–907 lie on the Cytoplasmic side of the membrane; the sequence is NPHFKEDMGS…LSSVAFVPCL (84 aa).

It belongs to the G-protein coupled receptor 1 family. As to quaternary structure, identified in a complex composed of RNF43, LGR5 and RSPO1. Also interacts with other R-spondin ligands, including RSPO2, RSPO3 and RSPO4. Expressed in the intestinal epithelium (at protein level). Expressed in the gonads, the adrenal gland, and in the brain. In the central nervous system expression is restricted to the olfactory bulb. In the adrenal gland detected only in the neural-crest derived chromaffin cells of the medulla, but not in the cells of the adrenal cortex. In the gonads, the expression is high in Graafian follicle, but absent from primary and secondary follicles. In the intestine, exclusively expressed in cycling crypt base columnar cells. Expressed in the lower bulge and secondary germ area of telogen hair follicles and in the lower outer root sheath of anagen hair follicle.

The protein resides in the cell membrane. It is found in the golgi apparatus. The protein localises to the trans-Golgi network membrane. Functionally, receptor for R-spondins that potentiates the canonical Wnt signaling pathway and acts as a stem cell marker of the intestinal epithelium and the hair follicle. Upon binding to R-spondins (RSPO1, RSPO2, RSPO3 or RSPO4), associates with phosphorylated LRP6 and frizzled receptors that are activated by extracellular Wnt receptors, triggering the canonical Wnt signaling pathway to increase expression of target genes. In contrast to classical G-protein coupled receptors, does not activate heterotrimeric G-proteins to transduce the signal. Involved in the development and/or maintenance of the adult intestinal stem cells during postembryonic development. The protein is Leucine-rich repeat-containing G-protein coupled receptor 5 (Lgr5) of Mus musculus (Mouse).